The primary structure comprises 135 residues: Large ribosomal subunit protein uL16c (135 aa).

At methionine 1 the chain carries N-methylmethionine.

As to quaternary structure, component of the chloroplast large ribosomal subunit (LSU). Mature 70S chloroplast ribosomes of higher plants consist of a small (30S) and a large (50S) subunit. The 30S small subunit contains 1 molecule of ribosomal RNA (16S rRNA) and 24 different proteins. The 50S large subunit contains 3 rRNA molecules (23S, 5S and 4.5S rRNA) and 33 different proteins. Partially alpha-N-monomethylated at Met-1 (10%), whereas 90% of it is blocked to Edman degradation, probably by trimethylation.

The protein localises to the plastid. It localises to the chloroplast. In terms of biological role, component of the chloroplast ribosome (chloro-ribosome), a dedicated translation machinery responsible for the synthesis of chloroplast genome-encoded proteins, including proteins of the transcription and translation machinery and components of the photosynthetic apparatus. The protein is Large ribosomal subunit protein uL16c of Spinacia oleracea (Spinach).